A 652-amino-acid polypeptide reads, in one-letter code: Trypanothione synthetase (652 aa).

A Peptidase C51 domain is found at 34–174 (SNKHDHFFSG…QHKDGVWTII (141 aa)). 328-330 (RFD) provides a ligand contact to ATP. Mg(2+)-binding residues include Asp-330, Glu-344, and Asn-346. ATP-binding positions include Lys-513, Lys-548, Gly-555, Gln-583, and 618-620 (IIT).

In the C-terminal section; belongs to the glutathionylspermidine synthase preATP-grasp family. Mg(2+) is required as a cofactor. The N-terminus is blocked.

The enzyme catalyses spermidine + glutathione + ATP = glutathionylspermidine + ADP + phosphate + H(+). It catalyses the reaction glutathionylspermidine + glutathione + ATP = trypanothione + ADP + phosphate + H(+). Its function is as follows. Conjugates glutathione (gamma-Glu-Cys-Gly) and glutathionylspermidine to form trypanothione (N(1),N(8)-bis(glutathionyl)spermidine), which is involved in maintaining intracellular thiol redox and in defense against oxidants. The polypeptide is Trypanothione synthetase (TRS) (Crithidia fasciculata).